The chain runs to 255 residues: uncharacterized protein (255 aa).

This is an uncharacterized protein from Acanthamoeba polyphaga mimivirus (APMV).